A 192-amino-acid polypeptide reads, in one-letter code: Erythropoietin (192 aa).

An N-terminal signal peptide occupies residues 1 to 26 (MGVRECPALLLLLSLLLPPLGLPALG). Cystine bridges form between C33–C187 and C55–C59. An N-linked (GlcNAc...) asparagine glycan is attached at N50. Residues N64 and N109 are each glycosylated (N-linked (GlcNAc...) asparagine).

The protein belongs to the EPO/TPO family.

The protein resides in the secreted. Its function is as follows. Hormone involved in the regulation of erythrocyte proliferation and differentiation and the maintenance of a physiological level of circulating erythrocyte mass. Binds to EPOR leading to EPOR dimerization and JAK2 activation thereby activating specific downstream effectors, including STAT1 and STAT3. This Equus caballus (Horse) protein is Erythropoietin (EPO).